The following is a 388-amino-acid chain: Succinate--CoA ligase [ADP-forming] subunit beta (388 aa).

The ATP-grasp domain occupies 9–244 (KELFRTYGIP…TDEEDPLEVE (236 aa)). ATP-binding positions include K46, 53–55 (GRG), E99, V102, and E107. Mg(2+) is bound by residues N199 and D213. Residues N264 and 321–323 (GIL) contribute to the substrate site.

The protein belongs to the succinate/malate CoA ligase beta subunit family. As to quaternary structure, heterotetramer of two alpha and two beta subunits. Requires Mg(2+) as cofactor.

The enzyme catalyses succinate + ATP + CoA = succinyl-CoA + ADP + phosphate. It carries out the reaction GTP + succinate + CoA = succinyl-CoA + GDP + phosphate. It functions in the pathway carbohydrate metabolism; tricarboxylic acid cycle; succinate from succinyl-CoA (ligase route): step 1/1. Succinyl-CoA synthetase functions in the citric acid cycle (TCA), coupling the hydrolysis of succinyl-CoA to the synthesis of either ATP or GTP and thus represents the only step of substrate-level phosphorylation in the TCA. The beta subunit provides nucleotide specificity of the enzyme and binds the substrate succinate, while the binding sites for coenzyme A and phosphate are found in the alpha subunit. In Desulfosudis oleivorans (strain DSM 6200 / JCM 39069 / Hxd3) (Desulfococcus oleovorans), this protein is Succinate--CoA ligase [ADP-forming] subunit beta.